A 350-amino-acid polypeptide reads, in one-letter code: Kelch domain-containing protein 8A (350 aa).

Kelch repeat units follow at residues 1 to 31 (MEVP…ETGG), 32 to 79 (QVYA…ALGK), 81 to 127 (IMVI…AKDY), 128 to 175 (RVYA…LRGS), 176 to 222 (KIYV…TLDN), 224 to 278 (LYSL…GLSG), and 279 to 326 (RVIV…VFKN).

The chain is Kelch domain-containing protein 8A (Klhdc8a) from Mus musculus (Mouse).